The following is a 134-amino-acid chain: Probable thionin-2.4 (134 aa).

Residues 1–24 form the signal peptide; it reads MEGKTLIVSVLIMSLFMAQNQVDA. Disulfide bonds link Cys27–Cys64, Cys28–Cys56, and Cys40–Cys50. Residues 71–134 constitute a propeptide, acidic domain; sequence DILENTGDAV…KGSMNAVENA (64 aa).

It belongs to the plant thionin (TC 1.C.44) family.

Its subcellular location is the secreted. Functionally, thionins are small plant proteins which are toxic to animal cells. They seem to exert their toxic effect at the level of the cell membrane. Their precise function is not known. The protein is Probable thionin-2.4 of Arabidopsis thaliana (Mouse-ear cress).